A 321-amino-acid polypeptide reads, in one-letter code: Methionyl-tRNA formyltransferase (321 aa).

S112 to P115 is a binding site for (6S)-5,6,7,8-tetrahydrofolate.

The protein belongs to the Fmt family.

It catalyses the reaction L-methionyl-tRNA(fMet) + (6R)-10-formyltetrahydrofolate = N-formyl-L-methionyl-tRNA(fMet) + (6S)-5,6,7,8-tetrahydrofolate + H(+). Functionally, attaches a formyl group to the free amino group of methionyl-tRNA(fMet). The formyl group appears to play a dual role in the initiator identity of N-formylmethionyl-tRNA by promoting its recognition by IF2 and preventing the misappropriation of this tRNA by the elongation apparatus. This Shewanella pealeana (strain ATCC 700345 / ANG-SQ1) protein is Methionyl-tRNA formyltransferase.